Here is a 123-residue protein sequence, read N- to C-terminus: Large ribosomal subunit protein mL52 (123 aa).

Residues 1–23 (MAALGTVLFTGVRRLHCSVAAWA) constitute a mitochondrion transit peptide. The span at 99-109 (QEEQRKQENAL) shows a compositional bias: basic and acidic residues. The disordered stretch occupies residues 99-123 (QEEQRKQENALKPKGASLKSPLPSQ).

This sequence belongs to the mitochondrion-specific ribosomal protein mL52 family. As to quaternary structure, component of the mitochondrial large ribosomal subunit (mt-LSU). Mature mammalian 55S mitochondrial ribosomes consist of a small (28S) and a large (39S) subunit. The 28S small subunit contains a 12S ribosomal RNA (12S mt-rRNA) and 30 different proteins. The 39S large subunit contains a 16S rRNA (16S mt-rRNA), a copy of mitochondrial valine transfer RNA (mt-tRNA(Val)), which plays an integral structural role, and 52 different proteins. mL52 connects the central protuberance to the body of the ribosome.

The protein resides in the mitochondrion. In Homo sapiens (Human), this protein is Large ribosomal subunit protein mL52 (MRPL52).